A 150-amino-acid polypeptide reads, in one-letter code: Large-conductance mechanosensitive channel (150 aa).

A run of 2 helical transmembrane segments spans residues 14–34 (VIDLAIGIIIGAAFGKIVTSF) and 81–101 (GVFLNSIIDFIIVAVAIFLVV).

The protein belongs to the MscL family. Homopentamer.

Its subcellular location is the cell membrane. Its function is as follows. Channel that opens in response to stretch forces in the membrane lipid bilayer. May participate in the regulation of osmotic pressure changes within the cell. In Syntrophomonas wolfei subsp. wolfei (strain DSM 2245B / Goettingen), this protein is Large-conductance mechanosensitive channel.